Here is a 252-residue protein sequence, read N- to C-terminus: Large ribosomal subunit protein uL29m (252 aa).

A mitochondrion-targeting transit peptide spans 1 to 39 (MSTSTVIRPVARSLLQLRKAGNTPPAFLLPCLQSSSTTS). Over residues 233 to 242 (EDVLAEAEGE) the composition is skewed to acidic residues. A disordered region spans residues 233–252 (EDVLAEAEGEAEPKPAQVTA).

This sequence belongs to the universal ribosomal protein uL29 family. As to quaternary structure, component of the mitochondrial large ribosomal subunit. Mature mitochondrial ribosomes consist of a small (37S) and a large (54S) subunit. The 37S subunit contains at least 33 different proteins and 1 molecule of RNA (15S). The 54S subunit contains at least 45 different proteins and 1 molecule of RNA (21S).

The protein resides in the mitochondrion. The protein is Large ribosomal subunit protein uL29m (mrpl4) of Botryotinia fuckeliana (strain B05.10) (Noble rot fungus).